Here is a 293-residue protein sequence, read N- to C-terminus: Ribosomal protein L11 methyltransferase (293 aa).

S-adenosyl-L-methionine is bound by residues threonine 146, glycine 167, aspartate 189, and asparagine 230.

The protein belongs to the methyltransferase superfamily. PrmA family.

It localises to the cytoplasm. It carries out the reaction L-lysyl-[protein] + 3 S-adenosyl-L-methionine = N(6),N(6),N(6)-trimethyl-L-lysyl-[protein] + 3 S-adenosyl-L-homocysteine + 3 H(+). Functionally, methylates ribosomal protein L11. This is Ribosomal protein L11 methyltransferase from Colwellia psychrerythraea (strain 34H / ATCC BAA-681) (Vibrio psychroerythus).